A 755-amino-acid polypeptide reads, in one-letter code: Large structural phosphoprotein (755 aa).

Disordered regions lie at residues glutamate 312–glutamate 333 and glutamine 522–threonine 555. Residues proline 535–threonine 555 show a composition bias toward polar residues.

Belongs to the herpesviridae large structural phosphoprotein family. Phosphorylated at multiple sites.

It localises to the virion tegument. The sequence is that of Large structural phosphoprotein (U11) from Homo sapiens (Human).